The sequence spans 632 residues: Arginine--tRNA ligase (632 aa).

A 'HIGH' region motif is present at residues 129–139; it reads ANPVHPLHVGS.

This sequence belongs to the class-I aminoacyl-tRNA synthetase family.

It localises to the cytoplasm. It catalyses the reaction tRNA(Arg) + L-arginine + ATP = L-arginyl-tRNA(Arg) + AMP + diphosphate. This is Arginine--tRNA ligase from Korarchaeum cryptofilum (strain OPF8).